Consider the following 122-residue polypeptide: Allatotropin (122 aa).

The N-terminal stretch at 1 to 23 (MRVILAITLLFVAGSFIATASKG) is a signal peptide. Residues 24–40 (RNYPRFFKHRMKLREIR) constitute a propeptide that is removed on maturation. Phenylalanine 53 is modified (phenylalanine amide). A propeptide spanning residues 57-122 (ESPAERIPDL…GDDSKKGTIA (66 aa)) is cleaved from the precursor.

Expressed in brain and ventral ganglia but not in the retrocerebral complex (at protein level).

Its subcellular location is the secreted. Its function is as follows. Neuropeptide stimulator of juvenile hormone synthesis. This chain is Allatotropin, found in Camponotus floridanus (Florida carpenter ant).